The following is a 141-amino-acid chain: Large ribosomal subunit protein uL11 (141 aa).

This sequence belongs to the universal ribosomal protein uL11 family. As to quaternary structure, part of the ribosomal stalk of the 50S ribosomal subunit. Interacts with L10 and the large rRNA to form the base of the stalk. L10 forms an elongated spine to which L12 dimers bind in a sequential fashion forming a multimeric L10(L12)X complex. Post-translationally, one or more lysine residues are methylated.

Its function is as follows. Forms part of the ribosomal stalk which helps the ribosome interact with GTP-bound translation factors. The chain is Large ribosomal subunit protein uL11 from Dinoroseobacter shibae (strain DSM 16493 / NCIMB 14021 / DFL 12).